A 396-amino-acid polypeptide reads, in one-letter code: Elongation factor Tu (396 aa).

Residues 11–205 (KPHVNIGTIG…IVDEYIPTPE (195 aa)) enclose the tr-type G domain. Positions 20-27 (GHVDHGKT) are G1. 20-27 (GHVDHGKT) is a GTP binding site. Residue Thr27 participates in Mg(2+) binding. The interval 61 to 65 (GITIN) is G2. A G3 region spans residues 82–85 (DAPG). Residues 82–86 (DAPGH) and 137–140 (NKCD) contribute to the GTP site. The tract at residues 137 to 140 (NKCD) is G4. The G5 stretch occupies residues 175 to 177 (SAL).

This sequence belongs to the TRAFAC class translation factor GTPase superfamily. Classic translation factor GTPase family. EF-Tu/EF-1A subfamily. Monomer.

The protein resides in the cytoplasm. The catalysed reaction is GTP + H2O = GDP + phosphate + H(+). In terms of biological role, GTP hydrolase that promotes the GTP-dependent binding of aminoacyl-tRNA to the A-site of ribosomes during protein biosynthesis. In Lactobacillus acidophilus (strain ATCC 700396 / NCK56 / N2 / NCFM), this protein is Elongation factor Tu.